The following is a 908-amino-acid chain: MATIHVDGKEYEVNGADNLLEACLSLGLDIPYFCWHPALGSVGACRQCAVKQYQNAEDTRGRLVMSCMTPASDGTFISIDDEEAKQFRESVVEWLMTNHPHDCPVCEEGGNCHLQDMTVMTGHSFRRYRFTKRTHRNQDLGPFISHEMNRCIACYRCVRYYKDYADGTDLGVYGAHDNVYFGRPEDGTLESEFSGNLVEICPTGVFTDKTHSERYNRKWDMQFAPSICQQCSIGCNISPGERYGELRRIENRYNGTVNHYFLCDRGRFGYGYVNLKDRPRQPVQRRGDDFITLNAEQAMQGAADILRQSKKVIGIGSPRASVESNFALRELVGEENFYTGIAHGEQERLQLALKVLREGGIYTPALREIESYDAVLVLGEDVTQTGARVALAVRQAVKGKAREMAAAQKVADWQIAAILNIGQRAKHPLFVTNVDDTRLDDIAAWTYRAPVEDQARLGFAIAHALDNSAPAVDGIEPELQSKIDVIVQALAGAKKPLIISGTNAGSLEVIQAAANVAKALKGRGADVGITMIARSVNSMGLGIMGGGSLEEALTELETGRADAVVVLENDLHRHASATRVNAALAKAPLVMVVDHQRTAIMENAHLVLSAASFAESDGTVINNEGRAQRFFQVYDPAYYDSKTVMLESWRWLHSLHSTLLSREVDWTQLDHVIDAVVAKIPELAGIKDAAPDATFRIRGQKLAREPHRYSGRTAMRANISVHEPRQPQDIDTMFTFSMEGNNQPTAHRSQVPFAWAPGWNSPQAWNKFQDEVGGKLRFGDPGVRLFETSENGLDYFTSVPARFQPQDGKWRIAPYYHLFGSDELSQRAPVFQCRMPQPYIKLNPADAAKLGVNAGTRVSFSYDGNTVTLPVEIAEGLTAGQVGLPMGMSGIAPVLAGAHLEDLKEAQQ.

Residues 2–83 (ATIHVDGKEY…GTFISIDDEE (82 aa)) enclose the 2Fe-2S ferredoxin-type domain. Residues Cys-34, Cys-45, Cys-48, and Cys-67 each coordinate [2Fe-2S] cluster. The 4Fe-4S His(Cys)3-ligated-type domain maps to 83 to 122 (EAKQFRESVVEWLMTNHPHDCPVCEEGGNCHLQDMTVMTG). Residues His-99, Cys-103, Cys-106, Cys-112, Cys-151, Cys-154, Cys-157, Cys-201, Cys-228, Cys-231, Cys-235, and Cys-263 each contribute to the [4Fe-4S] cluster site. Residues 221–277 (MQFAPSICQQCSIGCNISPGERYGELRRIENRYNGTVNHYFLCDRGRFGYGYVNLKD) enclose the 4Fe-4S Mo/W bis-MGD-type domain.

The protein belongs to the complex I 75 kDa subunit family. As to quaternary structure, composed of 13 different subunits. Subunits NuoCD, E, F, and G constitute the peripheral sector of the complex. Requires [2Fe-2S] cluster as cofactor. [4Fe-4S] cluster is required as a cofactor.

It carries out the reaction a quinone + NADH + 5 H(+)(in) = a quinol + NAD(+) + 4 H(+)(out). Its function is as follows. NDH-1 shuttles electrons from NADH, via FMN and iron-sulfur (Fe-S) centers, to quinones in the respiratory chain. The immediate electron acceptor for the enzyme in this species is believed to be ubiquinone. Couples the redox reaction to proton translocation (for every two electrons transferred, four hydrogen ions are translocated across the cytoplasmic membrane), and thus conserves the redox energy in a proton gradient. This Escherichia coli O157:H7 protein is NADH-quinone oxidoreductase subunit G (nuoG).